A 247-amino-acid polypeptide reads, in one-letter code: MSNRDTLFSAPIARLGDWTFDERVAEVFPDMIQRSVPGYSNIISMIGMLAERFVQPASQVYDLGCSLGAATLSVRRNVHHDGCKIIAVDNSPAMVERCRRHIDAFKAQTPVEVIEDDIRNITIENASMVVLNFTLQFLNPDDRQLLLNKIFQGLNPGGALVLSEKFSFEDSVVGELLFNMHHDFKRANGYSELEISQKRSMLENVMLTDSVETHKARLRKAGFEHSELWFQCFNFGSLVAVKGGSAT.

S-adenosyl-L-methionine contacts are provided by residues Tyr39, 64-66 (GCS), 89-90 (DN), 117-118 (DI), Asn132, and Arg199.

This sequence belongs to the class I-like SAM-binding methyltransferase superfamily. Cx-SAM synthase family. As to quaternary structure, homodimer.

It catalyses the reaction prephenate + S-adenosyl-L-methionine = carboxy-S-adenosyl-L-methionine + 3-phenylpyruvate + H2O. Functionally, catalyzes the conversion of S-adenosyl-L-methionine (SAM) to carboxy-S-adenosyl-L-methionine (Cx-SAM). The polypeptide is Carboxy-S-adenosyl-L-methionine synthase (Cronobacter sakazakii (strain ATCC BAA-894) (Enterobacter sakazakii)).